The following is a 619-amino-acid chain: Chaperone protein DnaK (619 aa).

Position 179 is a phosphothreonine; by autocatalysis (Thr179). Residues Gln584–Lys619 form a disordered region. The segment covering Ala585 to Asp605 has biased composition (low complexity). Over residues Gly606–Lys619 the composition is skewed to basic and acidic residues.

The protein belongs to the heat shock protein 70 family.

Functionally, acts as a chaperone. The protein is Chaperone protein DnaK of Elusimicrobium minutum (strain Pei191).